A 244-amino-acid chain; its full sequence is tRNA pseudouridine synthase A (244 aa).

Aspartate 52 (nucleophile) is an active-site residue. Tyrosine 110 serves as a coordination point for substrate.

This sequence belongs to the tRNA pseudouridine synthase TruA family. Homodimer.

The catalysed reaction is uridine(38/39/40) in tRNA = pseudouridine(38/39/40) in tRNA. Its function is as follows. Formation of pseudouridine at positions 38, 39 and 40 in the anticodon stem and loop of transfer RNAs. The chain is tRNA pseudouridine synthase A from Caldicellulosiruptor bescii (strain ATCC BAA-1888 / DSM 6725 / KCTC 15123 / Z-1320) (Anaerocellum thermophilum).